The following is a 54-amino-acid chain: Ribulose bisphosphate carboxylase large chain (54 aa).

The propeptide occupies Met1–Ser2. An N-acetylproline modification is found at Pro3. Lys14 carries the post-translational modification N6,N6,N6-trimethyllysine.

The protein belongs to the RuBisCO large chain family. Type I subfamily. In terms of assembly, heterohexadecamer of 8 large chains and 8 small chains.

The protein localises to the plastid. Its subcellular location is the chloroplast. The catalysed reaction is 2 (2R)-3-phosphoglycerate + 2 H(+) = D-ribulose 1,5-bisphosphate + CO2 + H2O. It carries out the reaction D-ribulose 1,5-bisphosphate + O2 = 2-phosphoglycolate + (2R)-3-phosphoglycerate + 2 H(+). Functionally, ruBisCO catalyzes two reactions: the carboxylation of D-ribulose 1,5-bisphosphate, the primary event in carbon dioxide fixation, as well as the oxidative fragmentation of the pentose substrate in the photorespiration process. Both reactions occur simultaneously and in competition at the same active site. This Ilex aquifolium (English holly) protein is Ribulose bisphosphate carboxylase large chain (rbcL).